The sequence spans 425 residues: Glutamyl-tRNA reductase (425 aa).

Substrate-binding positions include 49–52 (TCNR), Ser109, 114–116 (EGQ), and Gln120. Cys50 (nucleophile) is an active-site residue. Residue 189-194 (GAGETG) participates in NADP(+) binding.

Belongs to the glutamyl-tRNA reductase family. In terms of assembly, homodimer.

It carries out the reaction (S)-4-amino-5-oxopentanoate + tRNA(Glu) + NADP(+) = L-glutamyl-tRNA(Glu) + NADPH + H(+). The protein operates within porphyrin-containing compound metabolism; protoporphyrin-IX biosynthesis; 5-aminolevulinate from L-glutamyl-tRNA(Glu): step 1/2. It functions in the pathway porphyrin-containing compound metabolism; chlorophyll biosynthesis. In terms of biological role, catalyzes the NADPH-dependent reduction of glutamyl-tRNA(Glu) to glutamate 1-semialdehyde (GSA). This Pelodictyon phaeoclathratiforme (strain DSM 5477 / BU-1) protein is Glutamyl-tRNA reductase.